Reading from the N-terminus, the 438-residue chain is V-type ATP synthase beta chain (438 aa).

This sequence belongs to the ATPase alpha/beta chains family.

Produces ATP from ADP in the presence of a proton gradient across the membrane. The V-type beta chain is a regulatory subunit. This chain is V-type ATP synthase beta chain, found in Chlamydia felis (strain Fe/C-56) (Chlamydophila felis).